Consider the following 122-residue polypeptide: Large ribosomal subunit protein bL17 (122 aa).

It belongs to the bacterial ribosomal protein bL17 family. As to quaternary structure, part of the 50S ribosomal subunit. Contacts protein L32.

The polypeptide is Large ribosomal subunit protein bL17 (Wigglesworthia glossinidia brevipalpis).